A 518-amino-acid chain; its full sequence is Bifunctional purine biosynthesis protein PurH (518 aa).

The region spanning 1–144 is the MGS-like domain; it reads MSKRALISVS…KNHAAVTVVC (144 aa).

Belongs to the PurH family.

The enzyme catalyses (6R)-10-formyltetrahydrofolate + 5-amino-1-(5-phospho-beta-D-ribosyl)imidazole-4-carboxamide = 5-formamido-1-(5-phospho-D-ribosyl)imidazole-4-carboxamide + (6S)-5,6,7,8-tetrahydrofolate. The catalysed reaction is IMP + H2O = 5-formamido-1-(5-phospho-D-ribosyl)imidazole-4-carboxamide. It functions in the pathway purine metabolism; IMP biosynthesis via de novo pathway; 5-formamido-1-(5-phospho-D-ribosyl)imidazole-4-carboxamide from 5-amino-1-(5-phospho-D-ribosyl)imidazole-4-carboxamide (10-formyl THF route): step 1/1. The protein operates within purine metabolism; IMP biosynthesis via de novo pathway; IMP from 5-formamido-1-(5-phospho-D-ribosyl)imidazole-4-carboxamide: step 1/1. The sequence is that of Bifunctional purine biosynthesis protein PurH from Lactococcus lactis subsp. cremoris (strain SK11).